A 166-amino-acid polypeptide reads, in one-letter code: Lipoprotein signal peptidase (166 aa).

3 helical membrane-spanning segments follow: residues 12–32, 66–86, and 101–121; these read LPIA…KYLV, MEGW…LWLW, and AMII…GYVI. Active-site residues include D122 and D140. The chain crosses the membrane as a helical span at residues 132–152; the sequence is SFAVFNLADSFITVGAGAIIL.

The protein belongs to the peptidase A8 family.

The protein localises to the cell inner membrane. The enzyme catalyses Release of signal peptides from bacterial membrane prolipoproteins. Hydrolyzes -Xaa-Yaa-Zaa-|-(S,diacylglyceryl)Cys-, in which Xaa is hydrophobic (preferably Leu), and Yaa (Ala or Ser) and Zaa (Gly or Ala) have small, neutral side chains.. It functions in the pathway protein modification; lipoprotein biosynthesis (signal peptide cleavage). Functionally, this protein specifically catalyzes the removal of signal peptides from prolipoproteins. This is Lipoprotein signal peptidase from Sinorhizobium fredii (strain NBRC 101917 / NGR234).